Consider the following 72-residue polypeptide: MVSKKQKLSPISLNQNIDYKDIDLLTLFVTEQGKILPRRATGVTVQQQRRLAKAIKRARVLSLFPFVASNSI.

Belongs to the bacterial ribosomal protein bS18 family. As to quaternary structure, part of the 30S ribosomal subunit.

The protein resides in the plastid. It localises to the chloroplast. The polypeptide is Small ribosomal subunit protein bS18c (Phaeodactylum tricornutum (strain CCAP 1055/1)).